Reading from the N-terminus, the 305-residue chain is Tyrosine recombinase XerC (305 aa).

One can recognise a Core-binding (CB) domain in the interval 1 to 84 (MNEVFESYLT…TLRGFYKYAL (84 aa)). The Tyr recombinase domain maps to 105-299 (KLPVFMFPKQ…TAEQLQNLYK (195 aa)). Residues Arg-146, Lys-170, His-251, Arg-254, and His-277 contribute to the active site. Tyr-286 serves as the catalytic O-(3'-phospho-DNA)-tyrosine intermediate.

It belongs to the 'phage' integrase family. XerC subfamily. In terms of assembly, forms a cyclic heterotetrameric complex composed of two molecules of XerC and two molecules of XerD.

It is found in the cytoplasm. Its function is as follows. Site-specific tyrosine recombinase, which acts by catalyzing the cutting and rejoining of the recombining DNA molecules. The XerC-XerD complex is essential to convert dimers of the bacterial chromosome into monomers to permit their segregation at cell division. It also contributes to the segregational stability of plasmids. This Treponema denticola (strain ATCC 35405 / DSM 14222 / CIP 103919 / JCM 8153 / KCTC 15104) protein is Tyrosine recombinase XerC.